A 212-amino-acid polypeptide reads, in one-letter code: NEDD4 family-interacting protein 1 (212 aa).

Residues 1–14 are compositionally biased toward polar residues; sequence MSEQSSSSRYQQLQ. Residues 1–40 are disordered; the sequence is MSEQSSSSRYQQLQNEEEPGENAQASADAPPPYSSIAGES. Residues 1-107 lie on the Cytoplasmic side of the membrane; sequence MSEQSSSSRY…ADQLRIGNDG (107 aa). Short sequence motifs (PPxY motif) lie at residues 30 to 33 and 55 to 58; these read PPPY and PPSY. Residues 108-128 form a helical membrane-spanning segment; sequence IFMLTFFMAFLFNWIGFFLSF. Over 129–134 the chain is Extracellular; sequence CLTSSA. A helical transmembrane segment spans residues 135 to 155; it reads AGRYGAISGFGLSLIKWILIV. The Cytoplasmic portion of the chain corresponds to 156 to 163; the sequence is RFSTYFPG. Residues 164–184 traverse the membrane as a helical segment; sequence YFDGQYWLWWVFLVLGFLLFL. Residues 185 to 212 lie on the Extracellular side of the membrane; that stretch reads RGFINYAKVRKMPDNFSTLPRTRVLFIY.

The protein resides in the golgi apparatus membrane. May play a role in Golgi structure maintenance. This Xenopus laevis (African clawed frog) protein is NEDD4 family-interacting protein 1 (ndfip1).